We begin with the raw amino-acid sequence, 359 residues long: 3-dehydroquinate synthase (359 aa).

NAD(+)-binding positions include 71 to 76 (DGEAYK), 105 to 109 (GVVGD), 129 to 130 (TT), K142, and K151. Positions 184, 247, and 264 each coordinate Zn(2+).

The protein belongs to the sugar phosphate cyclases superfamily. Dehydroquinate synthase family. Co(2+) is required as a cofactor. Requires Zn(2+) as cofactor. The cofactor is NAD(+).

Its subcellular location is the cytoplasm. It catalyses the reaction 7-phospho-2-dehydro-3-deoxy-D-arabino-heptonate = 3-dehydroquinate + phosphate. It functions in the pathway metabolic intermediate biosynthesis; chorismate biosynthesis; chorismate from D-erythrose 4-phosphate and phosphoenolpyruvate: step 2/7. In terms of biological role, catalyzes the conversion of 3-deoxy-D-arabino-heptulosonate 7-phosphate (DAHP) to dehydroquinate (DHQ). This is 3-dehydroquinate synthase from Burkholderia orbicola (strain MC0-3).